The sequence spans 220 residues: Meiotic nuclear division protein 1 homolog (220 aa).

Positions 76-147 (SKALHARKRR…KVEIEKYQEC (72 aa)) form a coiled coil.

This sequence belongs to the MND1 family.

The protein localises to the nucleus. Functionally, required for proper homologous chromosome pairing and efficient cross-over and intragenic recombination during meiosis. Stimulates both DMC1- and RAD51-mediated homologous strand assimilation, which is required for the resolution of meiotic double-strand breaks. The polypeptide is Meiotic nuclear division protein 1 homolog (Danio rerio (Zebrafish)).